Reading from the N-terminus, the 156-residue chain is Small ribosomal subunit protein uS7 (156 aa).

This sequence belongs to the universal ribosomal protein uS7 family. Part of the 30S ribosomal subunit. Contacts proteins S9 and S11.

In terms of biological role, one of the primary rRNA binding proteins, it binds directly to 16S rRNA where it nucleates assembly of the head domain of the 30S subunit. Is located at the subunit interface close to the decoding center, probably blocks exit of the E-site tRNA. The chain is Small ribosomal subunit protein uS7 from Afipia carboxidovorans (strain ATCC 49405 / DSM 1227 / KCTC 32145 / OM5) (Oligotropha carboxidovorans).